The primary structure comprises 278 residues: Nucleotide-binding protein Tbd_0529 (278 aa).

8-15 (GLSGSGKS) serves as a coordination point for ATP. 57–60 (DARS) is a GTP binding site.

Belongs to the RapZ-like family.

Displays ATPase and GTPase activities. This chain is Nucleotide-binding protein Tbd_0529, found in Thiobacillus denitrificans (strain ATCC 25259 / T1).